Here is a 1661-residue protein sequence, read N- to C-terminus: Microtubule cross-linking factor 2 (1661 aa).

The tract at residues 1–187 (MEAPAAEPPV…EPSVAASSVG (187 aa)) is disordered. 2 stretches are compositionally biased toward low complexity: residues 76-94 (AVAP…VRTG) and 133-149 (LLGL…SAAG). Residues 167–176 (QQPPRPPASP) show a composition bias toward pro residues. Positions 211–240 (PSGLVRELEELRSENDYLKDEIEELRAEML) are required for association with Golgi apparatus membrane. Coiled-coil stretches lie at residues 218-281 (LEEL…AERR) and 310-351 (SMRL…LQTE). The interval 353-373 (ERPREHSLKKRGTRSLGKADK) is disordered. 3 coiled-coil regions span residues 450–484 (LKLV…MKDH), 820–865 (IKEL…LKED), and 1083–1117 (SQEK…LQKA). The residue at position 1169 (Ser-1169) is a Phosphoserine. The segment at 1196 to 1221 (AFGFVSSEPGDPEKDTKEKPGLSSRD) is disordered. Residues 1206–1215 (DPEKDTKEKP) show a composition bias toward basic and acidic residues. Ser-1255 carries the phosphoserine modification. Disordered regions lie at residues 1432–1456 (RPCC…DSSK), 1538–1563 (RAPS…ASYH), and 1636–1661 (HSPS…PPSE). The span at 1652–1661 (GEERALPPSE) shows a compositional bias: basic and acidic residues.

This sequence belongs to the MTCL family. As to quaternary structure, interacts with CLASP1 and CLASP2. The C-terminal 25 kDa form occurs as a monomer. In terms of processing, proteolytically cleaved in primary hepatocytes into a C-terminal 80 kDa form. Proteolytically cleaved into a C-terminal SOGA 25 kDa form that is detected in plasma. Phosphorylated during mitosis in a CDK1-dependent manner.

It is found in the cytoplasm. The protein localises to the cytoskeleton. It localises to the golgi apparatus membrane. Its subcellular location is the midbody. The protein resides in the secreted. In terms of biological role, microtubule-associated factor that enables integration of the centrosomal and Golgi-associated microtubules on the Golgi membrane, supporting directional migration. Preferentially acts on the perinuclear microtubules accumulated around the Golgi. Associates with the Golgi membrane through the N-terminal coiled-coil region and directly binds microtubules through the C-terminal domain. Required for faithful chromosome segregation during mitosis. Regulates autophagy by playing a role in the reduction of glucose production in an adiponectin- and insulin-dependent manner. This is Microtubule cross-linking factor 2 from Homo sapiens (Human).